We begin with the raw amino-acid sequence, 22 residues long: uncharacterized protein (22 aa).

Residues 3 to 22 (MFITGYDINQKQKKRYGLRG) traverse the membrane as a helical segment.

This sequence belongs to the asfivirus C84L family.

Its subcellular location is the host membrane. This is an uncharacterized protein from Ornithodoros (relapsing fever ticks).